The sequence spans 196 residues: GTP cyclohydrolase-2 (196 aa).

Position 49–53 (49–53 (RIHSE)) interacts with GTP. Residues cysteine 54, cysteine 65, and cysteine 67 each coordinate Zn(2+). GTP is bound by residues glutamine 70, 92–94 (EGR), and threonine 114. The active-site Proton acceptor is the aspartate 126. Arginine 128 (nucleophile) is an active-site residue. Residues threonine 149 and lysine 154 each coordinate GTP.

It belongs to the GTP cyclohydrolase II family. In terms of assembly, homodimer. Zn(2+) is required as a cofactor.

It carries out the reaction GTP + 4 H2O = 2,5-diamino-6-hydroxy-4-(5-phosphoribosylamino)-pyrimidine + formate + 2 phosphate + 3 H(+). It participates in cofactor biosynthesis; riboflavin biosynthesis; 5-amino-6-(D-ribitylamino)uracil from GTP: step 1/4. In terms of biological role, catalyzes the conversion of GTP to 2,5-diamino-6-ribosylamino-4(3H)-pyrimidinone 5'-phosphate (DARP), formate and pyrophosphate. This Buchnera aphidicola subsp. Schizaphis graminum (strain Sg) protein is GTP cyclohydrolase-2.